We begin with the raw amino-acid sequence, 287 residues long: Cuticle collagen 38 (287 aa).

A signal peptide spans 1 to 19 (MSKYLVPVCASISLVAVFG). The segment at 95 to 287 (QGCPPGPPGP…CPCPARAKKH (193 aa)) is disordered. A compositionally biased stretch (pro residues) spans 98–107 (PPGPPGPPGL). 2 Collagen-like domains span residues 145 to 200 (QGPP…GSEG) and 215 to 273 (GQPG…SIGP). The span at 184 to 205 (TGEQGPQGEPGTEGSEGPTGQD) shows a compositional bias: low complexity. The span at 206 to 215 (GTIGGPGLPG) shows a compositional bias: gly residues. Over residues 238 to 252 (DGEQGPQGPQGPDGQ) the composition is skewed to low complexity.

The protein belongs to the cuticular collagen family. As to quaternary structure, collagen polypeptide chains are complexed within the cuticle by disulfide bonds and other types of covalent cross-links.

It localises to the nucleus. Probable cuticular collagen-like protein. Nematode cuticles are composed largely of collagen-like proteins. The cuticle functions both as an exoskeleton and as a barrier to protect the worm from its environment. Acts downstream of the Wnt signaling pathway, perhaps in the formation of the adult cuticle. This Caenorhabditis elegans protein is Cuticle collagen 38.